A 147-amino-acid chain; its full sequence is Large ribosomal subunit protein bL9 (147 aa).

It belongs to the bacterial ribosomal protein bL9 family.

Binds to the 23S rRNA. The protein is Large ribosomal subunit protein bL9 of Geotalea daltonii (strain DSM 22248 / JCM 15807 / FRC-32) (Geobacter daltonii).